Reading from the N-terminus, the 321-residue chain is Biotin synthase (321 aa).

Residues 44–270 form the Radical SAM core domain; it reads RGVRIHILNN…DAEVRAAGGR (227 aa). [4Fe-4S] cluster-binding residues include cysteine 59, cysteine 63, and cysteine 66. Residues cysteine 103, cysteine 135, cysteine 195, and arginine 265 each coordinate [2Fe-2S] cluster.

Belongs to the radical SAM superfamily. Biotin synthase family. In terms of assembly, homodimer. The cofactor is [4Fe-4S] cluster. [2Fe-2S] cluster serves as cofactor.

The catalysed reaction is (4R,5S)-dethiobiotin + (sulfur carrier)-SH + 2 reduced [2Fe-2S]-[ferredoxin] + 2 S-adenosyl-L-methionine = (sulfur carrier)-H + biotin + 2 5'-deoxyadenosine + 2 L-methionine + 2 oxidized [2Fe-2S]-[ferredoxin]. The protein operates within cofactor biosynthesis; biotin biosynthesis; biotin from 7,8-diaminononanoate: step 2/2. In terms of biological role, catalyzes the conversion of dethiobiotin (DTB) to biotin by the insertion of a sulfur atom into dethiobiotin via a radical-based mechanism. In Magnetococcus marinus (strain ATCC BAA-1437 / JCM 17883 / MC-1), this protein is Biotin synthase.